Here is a 341-residue protein sequence, read N- to C-terminus: L-threonine 3-dehydrogenase (341 aa).

A Zn(2+)-binding site is contributed by Cys38. Active-site charge relay system residues include Thr40 and His43. Zn(2+)-binding residues include His63, Glu64, Cys93, Cys96, Cys99, and Cys107. Residues Ile175, Asp195, Arg200, 262–264 (LGI), and 286–287 (IY) contribute to the NAD(+) site.

This sequence belongs to the zinc-containing alcohol dehydrogenase family. In terms of assembly, homotetramer. Zn(2+) is required as a cofactor.

Its subcellular location is the cytoplasm. The enzyme catalyses L-threonine + NAD(+) = (2S)-2-amino-3-oxobutanoate + NADH + H(+). It functions in the pathway amino-acid degradation; L-threonine degradation via oxydo-reductase pathway; glycine from L-threonine: step 1/2. Functionally, catalyzes the NAD(+)-dependent oxidation of L-threonine to 2-amino-3-ketobutyrate. This is L-threonine 3-dehydrogenase from Shigella boydii serotype 4 (strain Sb227).